We begin with the raw amino-acid sequence, 201 residues long: Phosphoheptose isomerase 2 (201 aa).

Residues 39-198 (VIKAYKNGNK…EEELFGKGFS (160 aa)) form the SIS domain. 54 to 56 (NGG) contributes to the substrate binding site. Residues histidine 63 and glutamate 67 each coordinate Zn(2+). Substrate is bound by residues glutamate 67, 96–97 (ND), 122–124 (STS), serine 127, and glutamine 174. Zn(2+) is bound by residues glutamine 174 and histidine 182.

The protein belongs to the SIS family. GmhA subfamily. Homotetramer. Zn(2+) serves as cofactor.

It localises to the cytoplasm. It catalyses the reaction 2 D-sedoheptulose 7-phosphate = D-glycero-alpha-D-manno-heptose 7-phosphate + D-glycero-beta-D-manno-heptose 7-phosphate. It functions in the pathway carbohydrate biosynthesis; D-glycero-D-manno-heptose 7-phosphate biosynthesis; D-glycero-alpha-D-manno-heptose 7-phosphate and D-glycero-beta-D-manno-heptose 7-phosphate from sedoheptulose 7-phosphate: step 1/1. Its pathway is capsule biogenesis; capsule polysaccharide biosynthesis. Functionally, catalyzes the isomerization of sedoheptulose 7-phosphate in D-glycero-D-manno-heptose 7-phosphate. No activity with L-galacto-heptulose, L-galacto-heptulose 7-phosphate or D-manno-heptulose. The protein is Phosphoheptose isomerase 2 of Campylobacter jejuni subsp. jejuni serotype O:2 (strain ATCC 700819 / NCTC 11168).